The primary structure comprises 468 residues: 3-isopropylmalate dehydratase large subunit (468 aa).

[4Fe-4S] cluster is bound by residues C347, C407, and C410.

Belongs to the aconitase/IPM isomerase family. LeuC type 1 subfamily. As to quaternary structure, heterodimer of LeuC and LeuD. It depends on [4Fe-4S] cluster as a cofactor.

The enzyme catalyses (2R,3S)-3-isopropylmalate = (2S)-2-isopropylmalate. The protein operates within amino-acid biosynthesis; L-leucine biosynthesis; L-leucine from 3-methyl-2-oxobutanoate: step 2/4. Functionally, catalyzes the isomerization between 2-isopropylmalate and 3-isopropylmalate, via the formation of 2-isopropylmaleate. This Prochlorococcus marinus (strain AS9601) protein is 3-isopropylmalate dehydratase large subunit.